The sequence spans 160 residues: Large ribosomal subunit protein eL21A (160 aa).

Lys32 is covalently cross-linked (Glycyl lysine isopeptide (Lys-Gly) (interchain with G-Cter in ubiquitin)).

This sequence belongs to the eukaryotic ribosomal protein eL21 family. Component of the large ribosomal subunit (LSU). Mature yeast ribosomes consist of a small (40S) and a large (60S) subunit. The 40S small subunit contains 1 molecule of ribosomal RNA (18S rRNA) and 33 different proteins (encoded by 57 genes). The large 60S subunit contains 3 rRNA molecules (25S, 5.8S and 5S rRNA) and 46 different proteins (encoded by 81 genes).

Its subcellular location is the cytoplasm. Functionally, component of the ribosome, a large ribonucleoprotein complex responsible for the synthesis of proteins in the cell. The small ribosomal subunit (SSU) binds messenger RNAs (mRNAs) and translates the encoded message by selecting cognate aminoacyl-transfer RNA (tRNA) molecules. The large subunit (LSU) contains the ribosomal catalytic site termed the peptidyl transferase center (PTC), which catalyzes the formation of peptide bonds, thereby polymerizing the amino acids delivered by tRNAs into a polypeptide chain. The nascent polypeptides leave the ribosome through a tunnel in the LSU and interact with protein factors that function in enzymatic processing, targeting, and the membrane insertion of nascent chains at the exit of the ribosomal tunnel. The chain is Large ribosomal subunit protein eL21A from Saccharomyces cerevisiae (strain ATCC 204508 / S288c) (Baker's yeast).